A 137-amino-acid chain; its full sequence is Small ribosomal subunit protein uS12 (137 aa).

Disordered regions lie at residues 1–21 and 34–57; these read MPTI…KSDS and VHTK…TPKK. 3-methylthioaspartic acid is present on Asp-102.

It belongs to the universal ribosomal protein uS12 family. As to quaternary structure, part of the 30S ribosomal subunit. Contacts proteins S8 and S17. May interact with IF1 in the 30S initiation complex.

In terms of biological role, with S4 and S5 plays an important role in translational accuracy. Functionally, interacts with and stabilizes bases of the 16S rRNA that are involved in tRNA selection in the A site and with the mRNA backbone. Located at the interface of the 30S and 50S subunits, it traverses the body of the 30S subunit contacting proteins on the other side and probably holding the rRNA structure together. The combined cluster of proteins S8, S12 and S17 appears to hold together the shoulder and platform of the 30S subunit. The polypeptide is Small ribosomal subunit protein uS12 (Streptococcus equi subsp. zooepidemicus (strain H70)).